The primary structure comprises 283 residues: Elongation factor Ts (283 aa).

Residues 80–83 (TDFV) are involved in Mg(2+) ion dislocation from EF-Tu.

This sequence belongs to the EF-Ts family.

It localises to the cytoplasm. Its function is as follows. Associates with the EF-Tu.GDP complex and induces the exchange of GDP to GTP. It remains bound to the aminoacyl-tRNA.EF-Tu.GTP complex up to the GTP hydrolysis stage on the ribosome. The protein is Elongation factor Ts of Haemophilus influenzae (strain PittEE).